A 160-amino-acid chain; its full sequence is Heme transporter hrg-5 (160 aa).

The helical transmembrane segment at 21-41 (IALTILDILIGFSNILSYAIQ) threads the bilayer. N44 carries an N-linked (GlcNAc...) asparagine glycan. Helical transmembrane passes span 47 to 67 (ALTLTAMVTLVACHTLQMFLA), 89 to 109 (ITLGFLALGCFVVCFIIAGVT), and 123 to 142 (FTGLWATAITKYTWQNALLA). The N-linked (GlcNAc...) asparagine glycan is linked to N144.

It belongs to the HRG family.

Its subcellular location is the membrane. Its function is as follows. Heme transporter. This chain is Heme transporter hrg-5 (hrg-5), found in Caenorhabditis elegans.